The sequence spans 451 residues: Adenylosuccinate synthetase isozyme 2 (451 aa).

Residues 34–40 (GDEGKGK) and 62–64 (GHT) each bind GTP. Asp-35 (proton acceptor) is an active-site residue. Residues Asp-35 and Gly-62 each coordinate Mg(2+). Position 35 (Asp-35) interacts with substrate. Residues 35 to 38 (DEGK), 60 to 63 (NAGH), Thr-157, Arg-171, Asn-250, Thr-265, and Arg-329 each bind IMP. The active-site Proton donor is the His-63. 325 to 331 (VTTGRKR) contacts substrate. GTP contacts are provided by residues Arg-331, 357–359 (KLD), and 439–442 (GVGK).

It belongs to the adenylosuccinate synthetase family. Homodimer. Mg(2+) is required as a cofactor.

Its subcellular location is the cytoplasm. It localises to the mitochondrion. The catalysed reaction is IMP + L-aspartate + GTP = N(6)-(1,2-dicarboxyethyl)-AMP + GDP + phosphate + 2 H(+). The protein operates within purine metabolism; AMP biosynthesis via de novo pathway; AMP from IMP: step 1/2. With respect to regulation, inhibited competitively by AMP and IMP and non-competitively by fructose 1,6-bisphosphate. Plays an important role in the de novo pathway and in the salvage pathway of purine nucleotide biosynthesis. Catalyzes the first committed step in the biosynthesis of AMP from IMP. The chain is Adenylosuccinate synthetase isozyme 2 from Gallus gallus (Chicken).